The chain runs to 246 residues: Ribosomal RNA small subunit methyltransferase G (246 aa).

S-adenosyl-L-methionine is bound by residues G81, F86, 137 to 138 (AE), and R156. A disordered region spans residues 221–246 (LVLIRKERPTPKAYPRRAGVPAKSPL).

It belongs to the methyltransferase superfamily. RNA methyltransferase RsmG family.

The protein localises to the cytoplasm. In terms of biological role, specifically methylates the N7 position of a guanine in 16S rRNA. The protein is Ribosomal RNA small subunit methyltransferase G of Symbiobacterium thermophilum (strain DSM 24528 / JCM 14929 / IAM 14863 / T).